The primary structure comprises 740 residues: Polyribonucleotide nucleotidyltransferase (740 aa).

The Mg(2+) site is built by aspartate 514 and aspartate 520. The 60-residue stretch at 580 to 639 (PRIITVKIPVDKIGEVIGPKRQMINQIQEDTGAEITIEDDGTIYIGAADGPAAEAARATI) folds into the KH domain. Positions 651–723 (GERILGSVVK…SRGKLSLIPV (73 aa)) constitute an S1 motif domain.

Belongs to the polyribonucleotide nucleotidyltransferase family. Homotrimer. Mg(2+) is required as a cofactor.

The protein localises to the cytoplasm. It catalyses the reaction RNA(n+1) + phosphate = RNA(n) + a ribonucleoside 5'-diphosphate. Involved in mRNA degradation. Catalyzes the phosphorolysis of single-stranded polyribonucleotides processively in the 3'- to 5'-direction. This chain is Polyribonucleotide nucleotidyltransferase, found in Streptomyces antibioticus.